The primary structure comprises 630 residues: Terpinolene synthase, chloroplastic (630 aa).

The N-terminal 52 residues, 1–52 (MALVSILPLSSKSVLHKSWIVSTYEHKAISRTIPNLGLRGRGKSVTHSLRMS), are a transit peptide targeting the chloroplast. 4 residues coordinate Mg(2+): Asp381, Asp385, Asn525, and Asp533. The short motif at 381-385 (DDIYD) is the DDXXD motif element.

The protein belongs to the terpene synthase family. Tpsd subfamily. Mg(2+) serves as cofactor. Requires Mn(2+) as cofactor. K(+) is required as a cofactor.

It is found in the plastid. Its subcellular location is the chloroplast. It carries out the reaction (2E)-geranyl diphosphate = terpinolene + diphosphate. It participates in terpene metabolism; oleoresin biosynthesis. Its function is as follows. Involved in defensive oleoresin formation in conifers in response to insect attack or other injury. Involved in monoterpene (C10) olefins biosynthesis. In Abies grandis (Grand fir), this protein is Terpinolene synthase, chloroplastic (ag9).